A 910-amino-acid polypeptide reads, in one-letter code: Auxilin (910 aa).

Repeat copies occupy residues 33 to 36 (NLKD), 37 to 40 (NLKD), and 41 to 44 (TLKD). Residues 33–44 (NLKDNLKDTLKD) are 3 X 4 AA approximate tandem repeats. The region spanning 52–219 (SVTSYTKGDL…GYMCDLLADK (168 aa)) is the Phosphatase tensin-type domain. The residue at position 109 (S109) is a Phosphoserine. The active-site Phosphocysteine intermediate is the C161. The region spanning 225-363 (FKPLTIKSIT…FQVTLDVELQ (139 aa)) is the C2 tensin-type domain. The short motif at 406–414 (PIDIPPDNP) is the SH3-binding element. The tract at residues 448–772 (QESEQSDDEL…RGKAAANLEG (325 aa)) is disordered. 4 positions are modified to phosphoserine: S450, S453, S560, and S567. Residues 547–569 (PSGPTSTQSTPRRSATSTSASPT) show a composition bias toward low complexity. Residues 596-626 (FLNTASASSDPFLQPTRSPSPTVHASSTPAV) are compositionally biased toward polar residues. Low complexity predominate over residues 651–666 (SAATSPTGSSHGTPTH). A compositionally biased stretch (gly residues) spans 715–725 (MGGGWQQGGGY). The span at 732–758 (SKPQSSMPHSSPQNRPNYNVSFSSMPG) shows a compositional bias: polar residues. The 65-residue stretch at 846-910 (TKWKPVGMAD…FENQGQKPLY (65 aa)) folds into the J domain.

As to quaternary structure, forms a complex composed of HSPA8, CLTC and DNAJC6. Interacts with HSPA8/HSC70 in an ATP-dependent manner; this interaction stimulates the HSPA8's ATPase activity. Interacts with CLTC; this interaction produces a local change in heavy-chain contacts, creating a detectable global distortion of the clathrin coat. Interacts with AP2A2. Interacts with DNM1(GTP-bound form); this interaction allows clathrin-coated vesicle (CCV) formation at the plasma membrane. In terms of processing, the N-terminus is blocked. Post-translationally, phosphorylation at Ser-567 modulates its ability to bind CLTC and therefore the synaptic vesicle endocytosis (SVE). Brain.

It localises to the cytoplasmic vesicle. The protein localises to the clathrin-coated vesicle. Functionally, may act as a protein phosphatase and/or a lipid phosphatase. Co-chaperone that recruits HSPA8/HSC70 to clathrin-coated vesicles (CCVs) and promotes the ATP-dependent dissociation of clathrin from CCVs and participates in clathrin-mediated endocytosis of synaptic vesicles and their recycling and also in intracellular trafficking. Firstly, binds tightly to the clathrin cages, at a ratio of one DNAJC6 per clathrin triskelion. The HSPA8:ATP complex then binds to the clathrin-auxilin cage, initially at a ratio of one HSPA8 per triskelion leading to ATP hydrolysis stimulation and causing a conformational change in the HSPA8. This cycle is repeated three times to drive to a complex containing the clathrin-auxilin cage associated to three HSPA8:ADP complex. The ATP hydrolysis of the third HSPA8:ATP complex leads to a concerted dismantling of the cage into component triskelia. Then, dissociates from the released triskelia and be recycled to initiate another cycle of HSPA8's recruitment. Also acts during the early steps of clathrin-coated vesicle (CCV) formation through its interaction with the GTP bound form of DNM1. The sequence is that of Auxilin from Bos taurus (Bovine).